A 262-amino-acid polypeptide reads, in one-letter code: Putative protein-methionine-sulfoxide reductase subunit YedZ1 (262 aa).

The protein belongs to the MsrP family.

Its function is as follows. Part of the YedY1-YedZ1 system that may repair oxidized proteins containing methionine sulfoxide residues (Met-O). The polypeptide is Putative protein-methionine-sulfoxide reductase subunit YedZ1 (Azospira oryzae (strain ATCC BAA-33 / DSM 13638 / PS) (Dechlorosoma suillum)).